A 503-amino-acid polypeptide reads, in one-letter code: tRNA-2-methylthio-N(6)-dimethylallyladenosine synthase (503 aa).

The 117-residue stretch at 5–121 (RSYEIRTFGC…LPVLLERARH (117 aa)) folds into the MTTase N-terminal domain. Residues Cys14, Cys50, Cys84, Cys158, Cys162, and Cys165 each contribute to the [4Fe-4S] cluster site. Residues 144 to 380 (RESAYAGWVS…IALQEEISLA (237 aa)) form the Radical SAM core domain. Residues 383–453 (RELIGTEVEL…PHHLIADAPV (71 aa)) form the TRAM domain.

The protein belongs to the methylthiotransferase family. MiaB subfamily. Monomer. It depends on [4Fe-4S] cluster as a cofactor.

It localises to the cytoplasm. The enzyme catalyses N(6)-dimethylallyladenosine(37) in tRNA + (sulfur carrier)-SH + AH2 + 2 S-adenosyl-L-methionine = 2-methylsulfanyl-N(6)-dimethylallyladenosine(37) in tRNA + (sulfur carrier)-H + 5'-deoxyadenosine + L-methionine + A + S-adenosyl-L-homocysteine + 2 H(+). Functionally, catalyzes the methylthiolation of N6-(dimethylallyl)adenosine (i(6)A), leading to the formation of 2-methylthio-N6-(dimethylallyl)adenosine (ms(2)i(6)A) at position 37 in tRNAs that read codons beginning with uridine. In Nocardia farcinica (strain IFM 10152), this protein is tRNA-2-methylthio-N(6)-dimethylallyladenosine synthase.